We begin with the raw amino-acid sequence, 296 residues long: tRNA dimethylallyltransferase (296 aa).

10-17 contributes to the ATP binding site; it reads GPTASGKT. 12–17 provides a ligand contact to substrate; that stretch reads TASGKT. The interaction with substrate tRNA stretch occupies residues 35–38; sequence DSRQ.

Belongs to the IPP transferase family. Monomer. Requires Mg(2+) as cofactor.

It catalyses the reaction adenosine(37) in tRNA + dimethylallyl diphosphate = N(6)-dimethylallyladenosine(37) in tRNA + diphosphate. Its function is as follows. Catalyzes the transfer of a dimethylallyl group onto the adenine at position 37 in tRNAs that read codons beginning with uridine, leading to the formation of N6-(dimethylallyl)adenosine (i(6)A). This is tRNA dimethylallyltransferase from Synechococcus sp. (strain RCC307).